Reading from the N-terminus, the 780-residue chain is Translation initiation factor IF-2 (780 aa).

Positions 44 to 194 (RQLDNAVDGT…TPPKPKELPE (151 aa)) are disordered. Over residues 53 to 65 (TNKKAEAPKKETT) the composition is skewed to basic and acidic residues. A compositionally biased stretch (polar residues) spans 66-81 (SNENGNSKGPNKPNMT). Composition is skewed to low complexity over residues 82–93 (NSNEKSNKPNKP) and 117–168 (ANTS…NNKG). In terms of domain architecture, tr-type G spans 281–450 (ERPPVVTIMG…LLVSEVEELK (170 aa)). The tract at residues 290 to 297 (GHVDHGKT) is G1. 290–297 (GHVDHGKT) serves as a coordination point for GTP. Positions 315–319 (GITQH) are G2. A G3 region spans residues 336-339 (DTPG). GTP contacts are provided by residues 336 to 340 (DTPGH) and 390 to 393 (NKID). The G4 stretch occupies residues 390 to 393 (NKID). The segment at 426 to 428 (SAK) is G5.

Belongs to the TRAFAC class translation factor GTPase superfamily. Classic translation factor GTPase family. IF-2 subfamily.

The protein resides in the cytoplasm. One of the essential components for the initiation of protein synthesis. Protects formylmethionyl-tRNA from spontaneous hydrolysis and promotes its binding to the 30S ribosomal subunits. Also involved in the hydrolysis of GTP during the formation of the 70S ribosomal complex. This Listeria welshimeri serovar 6b (strain ATCC 35897 / DSM 20650 / CCUG 15529 / CIP 8149 / NCTC 11857 / SLCC 5334 / V8) protein is Translation initiation factor IF-2.